A 155-amino-acid polypeptide reads, in one-letter code: Transcription antitermination protein NusB (155 aa).

It belongs to the NusB family.

In terms of biological role, involved in transcription antitermination. Required for transcription of ribosomal RNA (rRNA) genes. Binds specifically to the boxA antiterminator sequence of the ribosomal RNA (rrn) operons. The polypeptide is Transcription antitermination protein NusB (Ralstonia pickettii (strain 12J)).